We begin with the raw amino-acid sequence, 102 residues long: Small ribosomal subunit protein uS10 (102 aa).

It belongs to the universal ribosomal protein uS10 family. As to quaternary structure, part of the 30S ribosomal subunit.

Involved in the binding of tRNA to the ribosomes. In Caulobacter sp. (strain K31), this protein is Small ribosomal subunit protein uS10.